The following is a 267-amino-acid chain: Hydroxyethylthiazole kinase 2 (267 aa).

Methionine 41 is a substrate binding site. Lysine 116 and threonine 166 together coordinate ATP. Glycine 193 is a binding site for substrate.

Belongs to the Thz kinase family. The cofactor is Mg(2+).

It catalyses the reaction 5-(2-hydroxyethyl)-4-methylthiazole + ATP = 4-methyl-5-(2-phosphooxyethyl)-thiazole + ADP + H(+). The protein operates within cofactor biosynthesis; thiamine diphosphate biosynthesis; 4-methyl-5-(2-phosphoethyl)-thiazole from 5-(2-hydroxyethyl)-4-methylthiazole: step 1/1. In terms of biological role, catalyzes the phosphorylation of the hydroxyl group of 4-methyl-5-beta-hydroxyethylthiazole (THZ). The protein is Hydroxyethylthiazole kinase 2 of Streptococcus pneumoniae (strain Taiwan19F-14).